Here is a 270-residue protein sequence, read N- to C-terminus: Acyl-[acyl-carrier-protein]--UDP-N-acetylglucosamine O-acyltransferase (270 aa).

The protein belongs to the transferase hexapeptide repeat family. LpxA subfamily. In terms of assembly, homotrimer.

The protein localises to the cytoplasm. The enzyme catalyses a (3R)-hydroxyacyl-[ACP] + UDP-N-acetyl-alpha-D-glucosamine = a UDP-3-O-[(3R)-3-hydroxyacyl]-N-acetyl-alpha-D-glucosamine + holo-[ACP]. It participates in glycolipid biosynthesis; lipid IV(A) biosynthesis; lipid IV(A) from (3R)-3-hydroxytetradecanoyl-[acyl-carrier-protein] and UDP-N-acetyl-alpha-D-glucosamine: step 1/6. Its function is as follows. Involved in the biosynthesis of lipid A, a phosphorylated glycolipid that anchors the lipopolysaccharide to the outer membrane of the cell. This chain is Acyl-[acyl-carrier-protein]--UDP-N-acetylglucosamine O-acyltransferase, found in Bartonella tribocorum (strain CIP 105476 / IBS 506).